The following is a 296-amino-acid chain: Indole-3-glycerol phosphate synthase (296 aa).

The protein belongs to the TrpC family.

The enzyme catalyses 1-(2-carboxyphenylamino)-1-deoxy-D-ribulose 5-phosphate + H(+) = (1S,2R)-1-C-(indol-3-yl)glycerol 3-phosphate + CO2 + H2O. The protein operates within amino-acid biosynthesis; L-tryptophan biosynthesis; L-tryptophan from chorismate: step 4/5. The polypeptide is Indole-3-glycerol phosphate synthase (Microcystis aeruginosa (strain NIES-843 / IAM M-2473)).